The primary structure comprises 130 residues: Transcription antitermination protein NusB (130 aa).

The protein belongs to the NusB family.

Its function is as follows. Involved in transcription antitermination. Required for transcription of ribosomal RNA (rRNA) genes. Binds specifically to the boxA antiterminator sequence of the ribosomal RNA (rrn) operons. The sequence is that of Transcription antitermination protein NusB from Geobacillus kaustophilus (strain HTA426).